Here is a 100-residue protein sequence, read N- to C-terminus: Small ubiquitin-related modifier 1 (100 aa).

The segment covering 1 to 12 (MSANQEEDKKPG) has biased composition (basic and acidic residues). The tract at residues 1–21 (MSANQEEDKKPGDGGAHINLK) is disordered. A Ubiquitin-like domain is found at 16-93 (AHINLKVKGQ…IDAMLHQTGG (78 aa)). A Glycyl lysine isopeptide (Gly-Lys) (interchain with K-? in acceptor proteins) cross-link involves residue Gly-93.

The protein belongs to the ubiquitin family. SUMO subfamily. Interacts with SAE2, SCE1, SIZ1 and MMS21. Interacts with HSFA2. Covalently attached to ABI5, FLD, GTE3, HSFA2 and ICE1.

It is found in the nucleus. It localises to the cytoplasm. In terms of biological role, ubiquitin-like protein which can be covalently attached to target lysines as a monomer. Does not seem to be involved in protein degradation and may function as an antagonist of ubiquitin in the degradation process. Required for the massive protein sumoylation in the nucleus induced by heat shock and controlled by SIZ1. Involved in the regulation of the heat stress transcription factor HSFA2 in acquired thermotolerance. The chain is Small ubiquitin-related modifier 1 from Arabidopsis thaliana (Mouse-ear cress).